Consider the following 370-residue polypeptide: Phosphate acyltransferase (370 aa).

Residues 349–370 are disordered; it reads SAGRAGQDAPDEMAAPGRSEKR.

The protein belongs to the PlsX family. As to quaternary structure, homodimer. Probably interacts with PlsY.

It is found in the cytoplasm. The catalysed reaction is a fatty acyl-[ACP] + phosphate = an acyl phosphate + holo-[ACP]. It functions in the pathway lipid metabolism; phospholipid metabolism. Its function is as follows. Catalyzes the reversible formation of acyl-phosphate (acyl-PO(4)) from acyl-[acyl-carrier-protein] (acyl-ACP). This enzyme utilizes acyl-ACP as fatty acyl donor, but not acyl-CoA. The sequence is that of Phosphate acyltransferase from Cereibacter sphaeroides (strain ATCC 17023 / DSM 158 / JCM 6121 / CCUG 31486 / LMG 2827 / NBRC 12203 / NCIMB 8253 / ATH 2.4.1.) (Rhodobacter sphaeroides).